The sequence spans 638 residues: Actin-regulating kinase 1 (638 aa).

Positions 22 to 298 (VEIIKYLTSG…VYQLLKRISI (277 aa)) constitute a Protein kinase domain. ATP contacts are provided by residues 28–36 (LTSGGFAQV) and Lys56. The active-site Proton acceptor is the Asp159. At Ser478 the chain carries Phosphoserine. Residues 482-515 (YSTRGNIKKNQSVKESLTSSSLPGTSFTPTSTKV) show a composition bias toward polar residues. The disordered stretch occupies residues 482 to 518 (YSTRGNIKKNQSVKESLTSSSLPGTSFTPTSTKVNLK). 2 positions are modified to phosphoserine: Ser522 and Ser535. The segment at 569–638 (SEESFNARKM…LAGRKLSLDK (70 aa)) is disordered. Residues 582-593 (KLHEKGEIDKPT) are compositionally biased toward basic and acidic residues. The interval 602–615 (SKDKKTKPTPPPKP) is interaction with SH3 domain of ABP1.

Belongs to the protein kinase superfamily. Ser/Thr protein kinase family. As to quaternary structure, interacts with ABP1, which is required for proper actin patch localization.

It is found in the cytoplasm. The protein localises to the cytoskeleton. It localises to the actin patch. The enzyme catalyses L-seryl-[protein] + ATP = O-phospho-L-seryl-[protein] + ADP + H(+). It carries out the reaction L-threonyl-[protein] + ATP = O-phospho-L-threonyl-[protein] + ADP + H(+). Its function is as follows. Involved in regulation of actin cytoskeleton organization and endocytosis. The sequence is that of Actin-regulating kinase 1 (ARK1) from Saccharomyces cerevisiae (strain ATCC 204508 / S288c) (Baker's yeast).